An 865-amino-acid chain; its full sequence is Probable beta-glucosidase J (865 aa).

D233 is an active-site residue. 4 N-linked (GlcNAc...) asparagine glycosylation sites follow: N330, N447, N503, and N764. The 169-residue stretch at 411–579 (TGQPGYTFRV…DTDTAIQQAV (169 aa)) folds into the PA14 domain.

The protein belongs to the glycosyl hydrolase 3 family.

Its subcellular location is the secreted. It catalyses the reaction Hydrolysis of terminal, non-reducing beta-D-glucosyl residues with release of beta-D-glucose.. Its pathway is glycan metabolism; cellulose degradation. Its function is as follows. Beta-glucosidases are one of a number of cellulolytic enzymes involved in the degradation of cellulosic biomass. Catalyzes the last step releasing glucose from the inhibitory cellobiose. In Aspergillus fumigatus (strain CBS 144.89 / FGSC A1163 / CEA10) (Neosartorya fumigata), this protein is Probable beta-glucosidase J (bglJ).